We begin with the raw amino-acid sequence, 601 residues long: Transcription factor ATEG_07666 (601 aa).

Positions 17–44 (CEECRRRKARCDRVRPKCGFCTENGMQC) form a DNA-binding region, zn(2)-C6 fungal-type.

The protein localises to the nucleus. Functionally, specific transcriptional regulator for the azasperpyranone A biosynthesis cluster B. In Aspergillus terreus (strain NIH 2624 / FGSC A1156), this protein is Transcription factor ATEG_07666.